A 361-amino-acid polypeptide reads, in one-letter code: Peptide chain release factor 1 (361 aa).

At Q240 the chain carries N5-methylglutamine.

This sequence belongs to the prokaryotic/mitochondrial release factor family. Methylated by PrmC. Methylation increases the termination efficiency of RF1.

The protein resides in the cytoplasm. In terms of biological role, peptide chain release factor 1 directs the termination of translation in response to the peptide chain termination codons UAG and UAA. This Mycobacterium leprae (strain Br4923) protein is Peptide chain release factor 1.